The primary structure comprises 248 residues: tRNA pseudouridine synthase A (248 aa).

Catalysis depends on Asp52, which acts as the Nucleophile. A substrate-binding site is contributed by Tyr113.

The protein belongs to the tRNA pseudouridine synthase TruA family. Homodimer.

The enzyme catalyses uridine(38/39/40) in tRNA = pseudouridine(38/39/40) in tRNA. Its function is as follows. Formation of pseudouridine at positions 38, 39 and 40 in the anticodon stem and loop of transfer RNAs. The polypeptide is tRNA pseudouridine synthase A (Mesorhizobium japonicum (strain LMG 29417 / CECT 9101 / MAFF 303099) (Mesorhizobium loti (strain MAFF 303099))).